We begin with the raw amino-acid sequence, 396 residues long: RNA binding protein fox-1 homolog 1 (396 aa).

The interval 1-119 (MNCEREQLRG…ESKSQPKRLH (119 aa)) is disordered. Positions 67 to 86 (PPTQTHSEQSADTSAQTVSG) are enriched in polar residues. A compositionally biased stretch (low complexity) spans 87-98 (TATQTDDAAPTD). A compositionally biased stretch (polar residues) spans 99–112 (GQPQTQPSENTESK). The RRM domain maps to 116–192 (KRLHVSNIPF…RKIEVNNATA (77 aa)). An asymmetric dimethylarginine mark is found at Arg-316 and Ala-337. Arg-387 is subject to Omega-N-methylarginine.

As to quaternary structure, binds to the C-terminus of ATXN2. In terms of tissue distribution, detected in brain (at protein level). Detected in heart, brain, neurons, skeletal muscle and embryo.

Its subcellular location is the nucleus. It localises to the cytoplasm. Functionally, RNA-binding protein that regulates alternative splicing events by binding to 5'-UGCAUGU-3' elements. Prevents binding of U2AF2 to the 3'-splice site. Regulates alternative splicing of tissue-specific exons and of differentially spliced exons during erythropoiesis. This Mus musculus (Mouse) protein is RNA binding protein fox-1 homolog 1 (Rbfox1).